The sequence spans 429 residues: Adenylosuccinate synthetase (429 aa).

GTP is bound by residues 12-18 and 40-42; these read GDEGKGK and GHT. D13 functions as the Proton acceptor in the catalytic mechanism. Mg(2+)-binding residues include D13 and G40. IMP is bound by residues 13–16, 38–41, T128, R142, Q223, T238, and R302; these read DEGK and NAGH. H41 functions as the Proton donor in the catalytic mechanism. 298–304 is a substrate binding site; the sequence is VNTGRPR. GTP is bound by residues R304, 330–332, and 412–414; these read KLD and GVG.

This sequence belongs to the adenylosuccinate synthetase family. Homodimer. The cofactor is Mg(2+).

The protein localises to the cytoplasm. It carries out the reaction IMP + L-aspartate + GTP = N(6)-(1,2-dicarboxyethyl)-AMP + GDP + phosphate + 2 H(+). It functions in the pathway purine metabolism; AMP biosynthesis via de novo pathway; AMP from IMP: step 1/2. Plays an important role in the de novo pathway of purine nucleotide biosynthesis. Catalyzes the first committed step in the biosynthesis of AMP from IMP. The protein is Adenylosuccinate synthetase of Corynebacterium urealyticum (strain ATCC 43042 / DSM 7109).